The primary structure comprises 347 residues: DnaJ protein ERDJ3B (347 aa).

The first 23 residues, 1 to 23 (MAAPRWIGPLLLLLLHFVAAVAG), serve as a signal peptide directing secretion. One can recognise a J domain in the interval 25-90 (SYYDVLQVPK…EKRKIYDRYG (66 aa)).

In terms of assembly, interacts with BIP1.

It localises to the endoplasmic reticulum. May play a role in protein folding in the endoplasmic reticulum. The sequence is that of DnaJ protein ERDJ3B from Oryza sativa subsp. japonica (Rice).